Here is a 728-residue protein sequence, read N- to C-terminus: 1,4-alpha-glucan branching enzyme GlgB (728 aa).

Catalysis depends on D405, which acts as the Nucleophile. The Proton donor role is filled by E458.

The protein belongs to the glycosyl hydrolase 13 family. GlgB subfamily. As to quaternary structure, monomer.

It carries out the reaction Transfers a segment of a (1-&gt;4)-alpha-D-glucan chain to a primary hydroxy group in a similar glucan chain.. It functions in the pathway glycan biosynthesis; glycogen biosynthesis. Its function is as follows. Catalyzes the formation of the alpha-1,6-glucosidic linkages in glycogen by scission of a 1,4-alpha-linked oligosaccharide from growing alpha-1,4-glucan chains and the subsequent attachment of the oligosaccharide to the alpha-1,6 position. The sequence is that of 1,4-alpha-glucan branching enzyme GlgB from Citrobacter koseri (strain ATCC BAA-895 / CDC 4225-83 / SGSC4696).